We begin with the raw amino-acid sequence, 578 residues long: Membrane protein insertase YidC (578 aa).

A helical transmembrane segment spans residues isoleucine 3–tryptophan 23. The disordered stretch occupies residues alanine 34–alanine 71. Residues alanine 37 to alanine 65 show a composition bias toward polar residues. Helical transmembrane passes span leucine 361 to leucine 381, leucine 387 to phenylalanine 407, leucine 457 to leucine 477, proline 500 to proline 520, and proline 535 to valine 555.

The protein belongs to the OXA1/ALB3/YidC family. Type 1 subfamily. In terms of assembly, interacts with the Sec translocase complex via SecD. Specifically interacts with transmembrane segments of nascent integral membrane proteins during membrane integration.

It is found in the cell inner membrane. Required for the insertion and/or proper folding and/or complex formation of integral membrane proteins into the membrane. Involved in integration of membrane proteins that insert both dependently and independently of the Sec translocase complex, as well as at least some lipoproteins. Aids folding of multispanning membrane proteins. This is Membrane protein insertase YidC from Pseudomonas paraeruginosa (strain DSM 24068 / PA7) (Pseudomonas aeruginosa (strain PA7)).